A 297-amino-acid chain; its full sequence is rRNA 2'-O-methyltransferase fibrillarin (297 aa).

Residues 1-56 (MRGGFGRGGGGRGGSRGGRGGFGRGGGRGGGRGGGRGGGRGGGRGGGRGGGRGGAG) are disordered. Asymmetric dimethylarginine is present on residues R2, R7, R12, R16, R19, R24, R28, R32, R36, R40, R44, R48, and R52. Residues 149-150 (TT), 168-169 (EF), 192-193 (DA), and 212-215 (DVAQ) each bind S-adenosyl-L-methionine.

It belongs to the methyltransferase superfamily. Fibrillarin family. Component of box C/D small nucleolar ribonucleoprotein (snoRNP) particles. It is associated with the U3, U8 and U13 small nuclear RNAs. By homology to other fibrillarins, some or all of the N-terminal domain arginines are modified to asymmetric dimethylarginine (DMA).

Its subcellular location is the nucleus. It is found in the nucleolus. It catalyses the reaction L-glutaminyl-[histone H2A] + S-adenosyl-L-methionine = N(5)-methyl-L-glutaminyl-[histone H2A] + S-adenosyl-L-homocysteine + H(+). S-adenosyl-L-methionine-dependent methyltransferase that has the ability to methylate both RNAs and proteins. Involved in pre-rRNA processing. Utilizes the methyl donor S-adenosyl-L-methionine to catalyze the site-specific 2'-hydroxyl methylation of ribose moieties in pre-ribosomal RNA. Site specificity is provided by a guide RNA that base pairs with the substrate. Methylation occurs at a characteristic distance from the sequence involved in base pairing with the guide RNA. Also acts as a protein methyltransferase by mediating methylation of 'Gln-105' of histone H2A (H2AQ105me), a modification that impairs binding of the FACT complex and is specifically present at 35S ribosomal DNA locus. The polypeptide is rRNA 2'-O-methyltransferase fibrillarin (Leishmania major).